Reading from the N-terminus, the 297-residue chain is IMPACT family member C14C8.09c (297 aa).

The stretch at 225–255 forms a coiled coil; sequence LRSELQEKNQKDKKKEVNKLEEKMTNAKEPN. 2 stretches are compositionally biased toward basic and acidic residues: residues 228–250 and 280–297; these read ELQE…KMTN and SVDH…EKEE. A disordered region spans residues 228–297; sequence ELQEKNQKDK…KIIKDVEKEE (70 aa).

Belongs to the IMPACT family.

The chain is IMPACT family member C14C8.09c from Schizosaccharomyces pombe (strain 972 / ATCC 24843) (Fission yeast).